The primary structure comprises 421 residues: MSPTSTATSLTDRFSAAKRASIALAIASNAEKDAALRGIAEGVLAAADSILAANAVDLATGRENGLSTGLLDRLTLTPARLQGLADAVLEIVALTDPVGQTVRGSALPNGVKITQIRVPFGVVGAIYEARPNVTIDIAALALKSGNAAVLRGGSAAIATNGVLVGVIQEALAAAGLPADAVQTIDDFGREGANGLMQARGFVDVLIPRGSAGLIQIVVTQSAVPVIETGAGVVHIVLDESAREDWAVDIVRNAKAQRPSACNAVETVLVLRAAAERLLSPVLGALTEAGVTIHADEIALPHSPGAIAVTAEDYATEHMSLDVSVRVVDDLDAAIEHIRTHSTQHTEAIVTNDLANAERFLNEVDSAVVMVNASTRFTDGGEFGFGAEVGISTQKLHARGPMGLPELTSTKWIVRGAGQVRS.

This sequence belongs to the gamma-glutamyl phosphate reductase family.

It localises to the cytoplasm. It carries out the reaction L-glutamate 5-semialdehyde + phosphate + NADP(+) = L-glutamyl 5-phosphate + NADPH + H(+). Its pathway is amino-acid biosynthesis; L-proline biosynthesis; L-glutamate 5-semialdehyde from L-glutamate: step 2/2. Its function is as follows. Catalyzes the NADPH-dependent reduction of L-glutamate 5-phosphate into L-glutamate 5-semialdehyde and phosphate. The product spontaneously undergoes cyclization to form 1-pyrroline-5-carboxylate. In Leifsonia xyli subsp. xyli (strain CTCB07), this protein is Gamma-glutamyl phosphate reductase.